The following is a 74-amino-acid chain: Pelophylaxin-2 (74 aa).

The first 22 residues, 1–22 (MFTMKKSLLFFFFLGTIALSLC), serve as a signal peptide directing secretion. The propeptide occupies 23–42 (EEERGADEEENGAEITDEEV). A disulfide bond links cysteine 68 and cysteine 74.

Expressed by the skin glands.

It is found in the secreted. Its function is as follows. Antimicrobial peptide. This Pelophylax fukienensis (Fukien gold-striped pond frog) protein is Pelophylaxin-2.